Consider the following 624-residue polypeptide: Forkhead box protein O1 (624 aa).

2 disordered regions span residues 1-62 and 94-128; these read MAEA…PSAS and APLSQHPPVPPAAAAAAAGGQLAGQPRKSSSSRRN. At threonine 24 the chain carries Phosphothreonine; by PKB/AKT1 or PKB/AKT2 and SGK1. Composition is skewed to low complexity over residues 37 to 62 and 105 to 119; these read SATSSPAPSGGAAANPDGAAGLPSAS and AAAAAAAGGQLAGQP. Positions 130 to 224 form a DNA-binding region, fork-head; it reads WGNLSYADLI…KSGKSPRRRA (95 aa). DNA-binding stretches follow at residues 181 to 188 and 204 to 207; these read NSIRHNLS and SSWW. At serine 182 the chain carries Phosphoserine; by STK4/MST1. 3 positions are modified to phosphoserine: serine 188, serine 204, and serine 205. The disordered stretch occupies residues 204–306; the sequence is SSWWMLNPEG…RLSPIMTEQD (103 aa). 2 positions are modified to N6-acetyllysine: lysine 215 and lysine 218. Serine 219 is subject to Phosphoserine; by CDK1. Arginine 221 and arginine 223 each carry omega-N-methylarginine; by PRMT1. The Nuclear localization signal motif lies at 221–223; that stretch reads RRR. Residue serine 226 is modified to Phosphoserine; by PKB/AKT1 and SGK1. An N6-acetyllysine mark is found at lysine 232, lysine 235, and lysine 244. Residues 234–245 are compositionally biased toward basic residues; it reads AKSRGRAAKKKA. Residues 253-532 are sufficient for interaction with NLK; the sequence is GAGDSPGSQF…RLAPVKTALQ (280 aa). 2 positions are modified to phosphoserine: serine 257 and serine 268. A compositionally biased stretch (polar residues) spans 279 to 296; that stretch reads NWSTFRPRTSSNASTISG. Serine 289 is modified (phosphoserine; by PKB/AKT1). The residue at position 292 (serine 292) is a Phosphoserine; by CK1 and SGK1. Serine 295 is modified (phosphoserine; by CK1). Phosphoserine; by DYRK1A is present on serine 299. At threonine 303 the chain carries Phosphothreonine. A required for interaction with RUNX2 region spans residues 333–428; the sequence is SEISNPENME…YGGMSQYCAP (96 aa). At lysine 393 the chain carries N6-acetyllysine. Positions 431-435 match the Required for interaction with SIRT1 motif; sequence LKELL.

Interacts with LRPPRC. Interacts with RUNX2; the interaction inhibits RUNX2 transcriptional activity and mediates the IGF1/insulin-dependent BGLAP expression in osteoblasts Interacts with PPP2R1A; the interaction regulates the dephosphorylation of FOXO1 at Thr-24 and Ser-263 leading to its nuclear import. Interacts with NLK. Interacts with SIRT1; the interaction results in the deacetylation of FOXO1 leading to activation of FOXO1-mediated transcription of genes involved in DNA repair and stress resistance. Binds to CDK1. Interacts with the 14-3-3 proteins, YWHAG and YWHAZ; the interactions require insulin-stimulated phosphorylation on Thr-24, promote nuclear exit and loss of transcriptional activity. Interacts with SKP2; the interaction ubiquitinates FOXO1 leading to its proteasomal degradation. The interaction requires the presence of KRIT1. Interacts (via the C-terminal half) with ATF4 (via its DNA binding domain); the interaction occurs in osteoblasts, regulates glucose homeostasis via suppression of beta-cell proliferation and subsequent decrease in insulin production. Interacts with PRMT1; the interaction methylates FOXO1, prevents PKB/AKT1 phosphorylation and retains FOXO1 in the nucleus. Interacts with EP300 and CREBBP; the interactions acetylate FOXO1. Interacts with SIRT2; the interaction is disrupted in response to oxidative stress or serum deprivation, leading to increased level of acetylated FOXO1, which promotes stress-induced autophagy by stimulating E1-like activating enzyme ATG7. Interacts (acetylated form) with ATG7; the interaction is increased in response to oxidative stress or serum deprivation and promotes the autophagic process leading to cell death. Interacts (acetylated form) with PPARG. Interacts with XBP1; this interaction is direct and leads to FOXO1 ubiquitination and degradation via the proteasome pathway. Interacts (via the Fork-head domain) with CEBPA; the interaction increases when FOXO1 is deacetylated. Interacts with WDFY2. Forms a complex with WDFY2 and AKT1. Interacts with CRY1. Interacts with PPIA/CYPA; the interaction promotes FOXO1 dephosphorylation, nuclear accumulation and transcriptional activity. Interacts with TOX4; FOXO1 is required for full induction of TOX4-dependent activity and the interaction is inhibited by insulin. Interacts (when phosphorylated on Ser-226) with STUB1/CHIP. Post-translationally, phosphorylation by NLK promotes nuclear export and inhibits the transcriptional activity. In response to growth factors, phosphorylation on Thr-24, Ser-226 and Ser-292 by PKB/AKT1 promotes nuclear export and inactivation of transactivational activity. Phosphorylation on Thr-24 is required for binding 14-3-3 proteins. Phosphorylation of Ser-226 decreases DNA-binding activity and promotes the phosphorylation of Thr-24 and Ser-289, permitting phosphorylation of Ser-292 and Ser-295, probably by CDK1, leading to nuclear exclusion and loss of function. Stress signals, such as response to oxygen or nitric oxide, attenuate the PKB/AKT1-mediated phosphorylation leading to nuclear retention. Phosphorylation of Ser-299 is independent of IGF1 and leads to reduced function. Dephosphorylated on Thr-24 and Ser-226 by PP2A in beta-cells under oxidative stress leading to nuclear retention. Phosphorylation of Ser-219 by CDK1 disrupts binding of 14-3-3 proteins leading to nuclear accumulation and has no effect on DNA binding nor transcriptional activity. Phosphorylation by STK4/MST1 on Ser-182, upon oxidative stress, inhibits binding to 14-3-3 proteins and nuclear export. PPIA/CYPA promotes its dephosphorylation on Ser-226. Ubiquitinated by SKP2. Ubiquitination leads to proteasomal degradation. Ubiquitinated by STUB1/CHIP; when Ser-226 is phosphorylated. In terms of processing, methylation inhibits AKT1-mediated phosphorylation at Ser-226 and is increased by oxidative stress. Post-translationally, acetylated. Acetylation at Lys-232 and Lys-244 are necessary for autophagic cell death induction. Deacetylated by SIRT2 in response to oxidative stress or serum deprivation, thereby negatively regulating FOXO1-mediated autophagic cell death. Once in the nucleus, acetylated by CREBBP/EP300. Acetylation diminishes the interaction with target DNA and attenuates the transcriptional activity. It increases the phosphorylation at Ser-226. Deacetylation by SIRT1 results in reactivation of the transcriptional activity. Oxidative stress by hydrogen peroxide treatment appears to promote deacetylation and uncoupling of insulin-induced phosphorylation. By contrast, resveratrol acts independently of acetylation. Acetylated at Lys-393, promoting its localization to the nucleus and transcription factor activity. Deacetylation at Lys-393 by SIRT6, promotes its translocation into the cytoplasm, preventing its transcription factor activity. Deacetylation and subsequent inhibition by SIRT6 has different effects depending on cell types: it inhibits gluconeogenesis in hepatocytes, promotes glucose sensing in pancreatic beta-cells and regulates lipid catabolism in brown adipocytes.

The protein localises to the cytoplasm. Its subcellular location is the nucleus. Transcription factor that is the main target of insulin signaling and regulates metabolic homeostasis in response to oxidative stress. Binds to the insulin response element (IRE) with consensus sequence 5'-TT[G/A]TTTTG-3' and the related Daf-16 family binding element (DBE) with consensus sequence 5'-TT[G/A]TTTAC-3'. Activity suppressed by insulin. Main regulator of redox balance and osteoblast numbers and controls bone mass. Orchestrates the endocrine function of the skeleton in regulating glucose metabolism. Also acts as a key regulator of chondrogenic commitment of skeletal progenitor cells in response to lipid availability: when lipids levels are low, translocates to the nucleus and promotes expression of SOX9, which induces chondrogenic commitment and suppresses fatty acid oxidation. Acts synergistically with ATF4 to suppress osteocalcin/BGLAP activity, increasing glucose levels and triggering glucose intolerance and insulin insensitivity. Also suppresses the transcriptional activity of RUNX2, an upstream activator of osteocalcin/BGLAP. Acts as an inhibitor of glucose sensing in pancreatic beta cells by acting as a transcription repressor and suppressing expression of PDX1. In hepatocytes, promotes gluconeogenesis by acting together with PPARGC1A and CEBPA to activate the expression of genes such as IGFBP1, G6PC1 and PCK1. Also promotes gluconeogenesis by directly promoting expression of PPARGC1A and G6PC1. Important regulator of cell death acting downstream of CDK1, PKB/AKT1 and STK4/MST1. Promotes neural cell death. Mediates insulin action on adipose tissue. Regulates the expression of adipogenic genes such as PPARG during preadipocyte differentiation and, adipocyte size and adipose tissue-specific gene expression in response to excessive calorie intake. Regulates the transcriptional activity of GADD45A and repair of nitric oxide-damaged DNA in beta-cells. Required for the autophagic cell death induction in response to starvation or oxidative stress in a transcription-independent manner. Mediates the function of MLIP in cardiomyocytes hypertrophy and cardiac remodeling. Positive regulator of apoptosis in cardiac smooth muscle cells as a result of its transcriptional activation of pro-apoptotic genes. Regulates endothelial cell (EC) viability and apoptosis in a PPIA/CYPA-dependent manner via transcription of CCL2 and BCL2L11 which are involved in EC chemotaxis and apoptosis. The sequence is that of Forkhead box protein O1 (FOXO1) from Bos taurus (Bovine).